The following is a 452-amino-acid chain: Mannan endo-1,6-alpha-mannosidase DCW1 (452 aa).

Positions 1-18 are cleaved as a signal peptide; the sequence is MKFSIYLIISLFSSFSHA. N25, N81, N106, N130, N200, N237, N240, N262, N271, and N286 each carry an N-linked (GlcNAc...) asparagine glycan. Residue G431 is the site of GPI-anchor amidated glycine attachment. Residues 432–452 constitute a propeptide, removed in mature form; that stretch reads AGIITAIIGASLVGSCVWLIL.

This sequence belongs to the glycosyl hydrolase 76 family.

Its subcellular location is the cell membrane. It catalyses the reaction Random hydrolysis of (1-&gt;6)-alpha-D-mannosidic linkages in unbranched (1-&gt;6)-mannans.. Functionally, probable mannosidase required for normal synthesis of the cell wall. This is Mannan endo-1,6-alpha-mannosidase DCW1 (DCW1) from Candida albicans (strain SC5314 / ATCC MYA-2876) (Yeast).